A 456-amino-acid chain; its full sequence is Cysteine--tRNA ligase (456 aa).

Cys28 serves as a coordination point for Zn(2+). The short motif at Met30–His40 is the 'HIGH' region element. Cys209, His234, and Glu238 together coordinate Zn(2+). The 'KMSKS' region signature appears at Lys266–Ser270. Residue Lys269 coordinates ATP.

This sequence belongs to the class-I aminoacyl-tRNA synthetase family. As to quaternary structure, monomer. The cofactor is Zn(2+).

It localises to the cytoplasm. The catalysed reaction is tRNA(Cys) + L-cysteine + ATP = L-cysteinyl-tRNA(Cys) + AMP + diphosphate. The protein is Cysteine--tRNA ligase of Dechloromonas aromatica (strain RCB).